A 312-amino-acid chain; its full sequence is MAEITAALVKELREKSGVGMMDCKKALAENNGDIEASIDWLRAKGLSKAAKKADRAAAEGLVAIATAEQGAGETATAVEVNAETDFVSRNDLFQGAARQIAGAALGTDGSVDAITAAKLAGGETVQDHLTNLIATIGENMMVRRAAKWTVENGVVASYIHNATAPDLGRIGVLVAVESTGDKAALRELGRKIAMHVAATSPLSLSPDDLDPAAIEREKAVFTEQALESGKPAAVVEKMIEGRIRKFLEEVVLLKQAFVMNPDQTVEQLVAETAKTLGAPVAVKGFTRLALGEGVEKKQDDFAAEVASMTGQA.

The interval 84–87 (TDFV) is involved in Mg(2+) ion dislocation from EF-Tu.

Belongs to the EF-Ts family.

It localises to the cytoplasm. Its function is as follows. Associates with the EF-Tu.GDP complex and induces the exchange of GDP to GTP. It remains bound to the aminoacyl-tRNA.EF-Tu.GTP complex up to the GTP hydrolysis stage on the ribosome. This chain is Elongation factor Ts, found in Caulobacter vibrioides (strain ATCC 19089 / CIP 103742 / CB 15) (Caulobacter crescentus).